Consider the following 227-residue polypeptide: MTIRMPNDRQRILVLGKTGTGKTCAAVWHLSQKDFKRKAWIVLNHKGDDLIDSIEGANHVDLNFRPKKPGLYIYHPIPDVDDAEVTQLLWDIHAMGDIGVYVDEGYMIPNRDPAFQALLTQGRSKKIPMIILSQRPVWLTRFAISESDFFQIFQLGDQRDRQTVQGFVPVDLEKLMQAPVNTVPALKKFHSIYYDVGANNCVIMTPVPTADAVLARFDLGKKRKQTL.

Residue 16 to 23 (GKTGTGKT) participates in ATP binding.

Heterodimer of P6 and P9; further multimerizes as hexamers of heterodimers. Part of the dodecameric portal complex that is composed of the packaging efficiency factor P6, the DNA packaging ATPase P9, and the internal heterododecamer P20/P22 which spans the virion inner membrane.

The protein resides in the virion. Together with the packaging efficiency factor P6, forms the external part of the portal vertex that is embeded in the capsid and which plays critical roles in genome packaging and genome ejection. Both proteins multimerize as a single ring-shaped heterdodecamer arranged around a central channel. The sequence is that of DNA packaging ATPase P9 (IX) from Enterobacteria phage PRD1 (Bacteriophage PRD1).